A 284-amino-acid chain; its full sequence is Polyamine aminopropyltransferase (284 aa).

A PABS domain is found at 2-237; it reads ELWYTEQHTE…GHWLFGFASK (236 aa). Gln-31 serves as a coordination point for S-methyl-5'-thioadenosine. 2 residues coordinate spermidine: His-62 and Asp-86. S-methyl-5'-thioadenosine-binding positions include Glu-106 and 137–138; that span reads DG. Asp-155 functions as the Proton acceptor in the catalytic mechanism. 155 to 158 lines the spermidine pocket; sequence DSTD. Pro-162 serves as a coordination point for S-methyl-5'-thioadenosine.

It belongs to the spermidine/spermine synthase family. In terms of assembly, homodimer or homotetramer.

Its subcellular location is the cytoplasm. It carries out the reaction S-adenosyl 3-(methylsulfanyl)propylamine + putrescine = S-methyl-5'-thioadenosine + spermidine + H(+). Its pathway is amine and polyamine biosynthesis; spermidine biosynthesis; spermidine from putrescine: step 1/1. Functionally, catalyzes the irreversible transfer of a propylamine group from the amino donor S-adenosylmethioninamine (decarboxy-AdoMet) to putrescine (1,4-diaminobutane) to yield spermidine. This Clostridium beijerinckii (strain ATCC 51743 / NCIMB 8052) (Clostridium acetobutylicum) protein is Polyamine aminopropyltransferase.